A 599-amino-acid polypeptide reads, in one-letter code: Aspartate--tRNA(Asp/Asn) ligase (599 aa).

Residue Glu-172 participates in L-aspartate binding. Positions 196 to 199 (QLFK) are aspartate. An L-aspartate-binding site is contributed by Arg-218. Residues 218–220 (RDE) and Gln-227 each bind ATP. His-454 contributes to the L-aspartate binding site. Glu-488 contributes to the ATP binding site. Arg-495 serves as a coordination point for L-aspartate. Residue 540-543 (GLDR) participates in ATP binding.

This sequence belongs to the class-II aminoacyl-tRNA synthetase family. Type 1 subfamily. In terms of assembly, homodimer.

The protein localises to the cytoplasm. It catalyses the reaction tRNA(Asx) + L-aspartate + ATP = L-aspartyl-tRNA(Asx) + AMP + diphosphate. In terms of biological role, aspartyl-tRNA synthetase with relaxed tRNA specificity since it is able to aspartylate not only its cognate tRNA(Asp) but also tRNA(Asn). Reaction proceeds in two steps: L-aspartate is first activated by ATP to form Asp-AMP and then transferred to the acceptor end of tRNA(Asp/Asn). The polypeptide is Aspartate--tRNA(Asp/Asn) ligase (Methylibium petroleiphilum (strain ATCC BAA-1232 / LMG 22953 / PM1)).